We begin with the raw amino-acid sequence, 232 residues long: Esterase YpfH (232 aa).

Catalysis depends on charge relay system residues Ser111, Asp159, and His191.

The protein belongs to the AB hydrolase superfamily. AB hydrolase 2 family.

Displays esterase activity toward palmitoyl-CoA and pNP-butyrate. This is Esterase YpfH (ypfH) from Escherichia coli (strain K12).